Consider the following 410-residue polypeptide: Translation initiation factor 2 subunit gamma (410 aa).

One can recognise a tr-type G domain in the interval 9-202; the sequence is QAEVNIGMVG…AIEEFIPTPE (194 aa). The G1 stretch occupies residues 18 to 25; the sequence is GHVDHGKT. D21, T25, G46, and T48 together coordinate Mg(2+). GTP is bound at residue 21–26; it reads DHGKTT. A G2 region spans residues 46–50; the sequence is GITIK. 4 residues coordinate Zn(2+): C61, C64, C73, and C76. The interval 90-93 is G3; sequence DAPG. GTP is bound by residues 145–148 and 180–182; these read NKIE and SAL. The interval 145–148 is G4; that stretch reads NKIE. The G5 stretch occupies residues 180-182; that stretch reads SAL.

This sequence belongs to the TRAFAC class translation factor GTPase superfamily. Classic translation factor GTPase family. EIF2G subfamily. In terms of assembly, heterotrimer composed of an alpha, a beta and a gamma chain. Requires Mg(2+) as cofactor.

It catalyses the reaction GTP + H2O = GDP + phosphate + H(+). In terms of biological role, eIF-2 functions in the early steps of protein synthesis by forming a ternary complex with GTP and initiator tRNA. In Thermococcus onnurineus (strain NA1), this protein is Translation initiation factor 2 subunit gamma.